A 176-amino-acid polypeptide reads, in one-letter code: MKTQCASTWLLGMTLILCSVHIYSLRRCLISVDMRLIEKSFHEIKRAMQTKDTFKNVTILSLENLRSIKPGDVCCMTNNLLTFYRDRVFQDHQERSLEVLRRISSIANSFLCVQKSLERCQVHRQCNCSQEATNATRIIHDNYNQLEVSSAALKSLGELNILLAWIDRNHLETPAA.

Positions Met1–Ser24 are cleaved as a signal peptide. 3 disulfide bridges follow: Cys28-Cys120, Cys74-Cys126, and Cys75-Cys128. Asn56 carries an N-linked (GlcNAc...) asparagine glycan. N-linked (GlcNAc...) asparagine glycans are attached at residues Asn127 and Asn134.

It belongs to the IL-10 family.

The protein localises to the secreted. Cytokine that functions as an anti-inflammatory and proangiogenic factor. Polarizes adaptive immunity to an anti-inflammatory phenotype through induction of T-helper 2 responses by both down-regulation of IFN-gamma and up-regulation of IL4 and IL5. Produced by osteocytes, stimulates granulopoiesis and neutrophil formation. Exerts its biological effect through a receptor complex consisting of a heterodimer of IL20RA and IL20RB. In turn, activates the Janus kinase (JAK) and signal transducer and activator of transcription (STAT) pathway, and importantly, STAT3. This is Interleukin-19 (Il19) from Mus musculus (Mouse).